The primary structure comprises 105 residues: Urease subunit beta (105 aa).

It belongs to the urease beta subunit family. In terms of assembly, heterotrimer of UreA (gamma), UreB (beta) and UreC (alpha) subunits. Three heterotrimers associate to form the active enzyme.

Its subcellular location is the cytoplasm. The catalysed reaction is urea + 2 H2O + H(+) = hydrogencarbonate + 2 NH4(+). It participates in nitrogen metabolism; urea degradation; CO(2) and NH(3) from urea (urease route): step 1/1. The chain is Urease subunit beta from Shewanella halifaxensis (strain HAW-EB4).